The chain runs to 273 residues: Cytoplasmic phosphatidylinositol transfer protein 1 (273 aa).

The tract at residues 244 to 273 (QAETNEKIHNTSGGANAAANAKEANDGDID) is disordered.

It belongs to the PtdIns transfer protein family. PI transfer class IIB subfamily.

Functionally, phosphatidylinositol transfer proteins mediate the monomeric transport of lipids by shielding a lipid from the aqueous environment and binding the lipid in a hydrophobic cavity. The protein is Cytoplasmic phosphatidylinositol transfer protein 1 (rdgBbeta) of Drosophila melanogaster (Fruit fly).